Consider the following 1595-residue polypeptide: MEKIFFNYPFNKGKLKTLLIWSILNTGQYNMINLVENLKKVGFQYATTAGISLGIDDLKTISTKYDLIEKTNDNIKDITNHLNLAVLNEVEHSQKLINSWQKISEILKININKKFKTVNKLNPIYMMAFSGARGNISQVRQLIGMRGLMADPNGQIIHLPIKSNFREGLTVTEYLISCYGARKGVVDTALRTATAGYLTRRLVDTAQHVIISQLDCGTKQGIFLSNLYQGTDILLALKDQLYGRVLGKDIKINSLMYLKNQQIDDSLSILLANHLKRVFIRSPLTCKASNSTLCQLCYGWNLSHSKLISLGEIVGVIAAQSIGEPGTQLTMRTFHTGGVFSGNVKSQLYSPFDGIVEYSSSLYGDIVNLYNGNFAFLVKRKGLIIINPIIKKIKPKKFEAILYTLVFVKNNEKVKKNQLIAQQSNKISNTQQIEGKYTVNSKLEGEILFDENHLSTNKKKIWILHGKIYKSVFPLQLFPKKNDFLSYKFPLAQAKLLNLSASFLKVCVVRKKRHFIKDNISQSNEILLFTEYPLYKFLIKNIKNYHQFQFFYPIQNKIKEVEKSLRINNKVIKDNRIKIPFNSIAKSKLLNLLNKRLEQNTFFSKNTFSNYYENTDERTTWFTQNSILKYNAIYFYKSSKSVEAKTSRKIPITFNSKNFLIKEKLFFIKNNSVLLPIFSSDFFTKFTLKNEYFKPKHNIQRKLGFLSPTSYFKYISNNYFLKYLNFYQKHISVEMNDIIKVKLYYKQEFEEKTNFKKQNLHKIDSKINLFMNKLILVIEHLILTKLFSTKINNINYLLFYFNYLKYLKESNKFTIFYCNKKKETIFDLLFLLKTLNTTSNLIILAENKISTKLLSEFIYQTIYLIKNNITINSTNSVLENFNYFQQRKEDLFQHRNIFEKVPNFSGKRFSNLSLNINNENYSISKAENKMLIQDLLTLTILNNNIKYFNSHKSFLDKRFFYNESLPIPKILKDFTSILNRINFWSFSSSQFYKKHFLFALKTDNLINIKNKNFIFISRIPQIQAVNFALKKSLKSSFDLKSYEILQYNLKFPLGFYSLIKMIIEERSLFDIDYFQKFIIQYKNFSFHLINKKLKNIFTNNSYGSFTDESTLLESKYFNKRRPTKTTFSKLMNQIKFKFFIKVPLLLSTFSKKDTVLFNIFITNKKENFRNYKIVNMLTNDFYKNLNLQTHSSEKNSQLKLSSKNLEIFNLFYTSSIINVIMKKSITNFNKNFFIDNLFQFSKTHFNWLPKWDTIVRIQFLSPYQGEIIAQNIVKYSGYKTLYNHLMILTKNEKLQVSIFRNKNQETIIKKDTKNYFITKPHCCKIYPKFGSLIYSTSQVSPGKKINQSGQIIEKSNSFLVLRKGTPLLSPITGIFYVWNGDFVSQGSPIMTLLYNKLKTGDIVQGIPKIEHFFEARKGNVDLIQTNLYIKLLAFFKKYNKTLSEYRAVKRSILKIQKIIIDGVCRVYCSQGILVSRKHFEVIVKQMTSKVKIVNGGETGLLEGEFINFQKLEKINTNLYHRRVVYEPLVLGITKVSLRTESFISSASFQETTKVLSQAALEKRIDFLNGLKENVILGKLIPGGTGLIVKIITNKI.

Residues C216, C286, C294, and C297 each contribute to the Zn(2+) site.

This sequence belongs to the RNA polymerase beta' chain family. RpoC2 subfamily. As to quaternary structure, in plastids the minimal PEP RNA polymerase catalytic core is composed of four subunits: alpha, beta, beta', and beta''. When a (nuclear-encoded) sigma factor is associated with the core the holoenzyme is formed, which can initiate transcription. It depends on Zn(2+) as a cofactor.

It localises to the plastid. Its subcellular location is the chloroplast. The enzyme catalyses RNA(n) + a ribonucleoside 5'-triphosphate = RNA(n+1) + diphosphate. Its function is as follows. DNA-dependent RNA polymerase catalyzes the transcription of DNA into RNA using the four ribonucleoside triphosphates as substrates. The protein is DNA-directed RNA polymerase subunit beta'' of Bigelowiella natans (Pedinomonas minutissima).